We begin with the raw amino-acid sequence, 264 residues long: Thymidylate synthase (264 aa).

R21 contacts dUMP. (6R)-5,10-methylene-5,6,7,8-tetrahydrofolate is bound at residue H51. 126-127 (RR) is a binding site for dUMP. C146 functions as the Nucleophile in the catalytic mechanism. DUMP is bound by residues 166–169 (RSCD), N177, and 207–209 (HLY). Position 169 (D169) interacts with (6R)-5,10-methylene-5,6,7,8-tetrahydrofolate. Residue A263 coordinates (6R)-5,10-methylene-5,6,7,8-tetrahydrofolate.

The protein belongs to the thymidylate synthase family. Bacterial-type ThyA subfamily. As to quaternary structure, homodimer.

It is found in the cytoplasm. It carries out the reaction dUMP + (6R)-5,10-methylene-5,6,7,8-tetrahydrofolate = 7,8-dihydrofolate + dTMP. It participates in pyrimidine metabolism; dTTP biosynthesis. Functionally, catalyzes the reductive methylation of 2'-deoxyuridine-5'-monophosphate (dUMP) to 2'-deoxythymidine-5'-monophosphate (dTMP) while utilizing 5,10-methylenetetrahydrofolate (mTHF) as the methyl donor and reductant in the reaction, yielding dihydrofolate (DHF) as a by-product. This enzymatic reaction provides an intracellular de novo source of dTMP, an essential precursor for DNA biosynthesis. This is Thymidylate synthase from Pectobacterium carotovorum subsp. carotovorum (strain PC1).